Consider the following 706-residue polypeptide: Ribosomal RNA large subunit methyltransferase K/L (706 aa).

In terms of domain architecture, THUMP spans 43 to 154 (LLYQSLLWSR…RDMASVALDL (112 aa)).

It belongs to the methyltransferase superfamily. RlmKL family.

It is found in the cytoplasm. The catalysed reaction is guanosine(2445) in 23S rRNA + S-adenosyl-L-methionine = N(2)-methylguanosine(2445) in 23S rRNA + S-adenosyl-L-homocysteine + H(+). It catalyses the reaction guanosine(2069) in 23S rRNA + S-adenosyl-L-methionine = N(2)-methylguanosine(2069) in 23S rRNA + S-adenosyl-L-homocysteine + H(+). Its function is as follows. Specifically methylates the guanine in position 2445 (m2G2445) and the guanine in position 2069 (m7G2069) of 23S rRNA. This chain is Ribosomal RNA large subunit methyltransferase K/L, found in Serratia proteamaculans (strain 568).